Consider the following 520-residue polypeptide: AMP-binding domain-containing enzyme iboA (520 aa).

180 to 191 (LTSGSTSGSPKV) contacts ATP. Residues 397–447 (DGNFHTGDLFEKQLDGSYLFRGRGDDWIKSEDSRFIDTKAIEEKINDVCSD) carry the FACS motif.

This sequence belongs to the ATP-dependent AMP-binding enzyme family. Mg(2+) serves as cofactor.

The protein operates within secondary metabolite biosynthesis. Functionally, AMP-binding domain-containing enzyme; part of the gene cluster that mediates the biosynthesis of the psychoactive metabolites ibotenic acid and muscimol. The first committed step is glutamate hydroxylation by the 2-oxoglutarate-dependent dioxygenase iboH, and the last step is decarboxylation of ibotenic acid to muscimol by the decarboxylase iboD. The order of the intermediate reactions is somewhat ambiguous. IboA likely activates the carboxylic acid at position 5 to introduce an amide bond, and the flavin monooxygenase iboF generates the N-O bond. There are several options for the latter step. One option is that iboF directly hydroxylates the amide nitrogen formed by iboA to produce a hydroxamic acid species. Another option is that iboF hydroxylates an external N-containing compound, whose resulting N-O bond is subsequently introduced into the hydroxyglutamate scaffold. The paralogous PLP-dependent cystathionine gamma-synthase-like enzymes iboG1 and iboG2 are likely involved in substitution of the OH group at position 3 by the O-N moiety. The first cyclic intermediate is most probably tricholomic acid which is likely desaturated to ibotenic acid by the cytochrome P450 monooxygenase iboC. This Amanita muscaria (strain Koide BX008) protein is AMP-binding domain-containing enzyme iboA.